We begin with the raw amino-acid sequence, 286 residues long: Beta-lactamase SHV-5 (286 aa).

Positions 1-21 are cleaved as a signal peptide; the sequence is MRYIRLCIISLLATLPLAVHA. Ser66 (acyl-ester intermediate) is an active-site residue. A disulfide bond links Cys73 and Cys119. Residue Glu164 is the Proton acceptor of the active site. 230–232 contributes to the substrate binding site; that stretch reads KTG.

It belongs to the class-A beta-lactamase family.

It catalyses the reaction a beta-lactam + H2O = a substituted beta-amino acid. SHV enzymes hydrolyze broad spectrum cephalosporins notably cefotaxime and ceftazidime. SHV-5 causes particularly high levels of resistance to aztreonam and ceftazidime. In Klebsiella pneumoniae, this protein is Beta-lactamase SHV-5 (bla).